The primary structure comprises 673 residues: UvrABC system protein B (673 aa).

The 158-residue stretch at 26-183 (EGLEDGLAHQ…RRLAELQYAR (158 aa)) folds into the Helicase ATP-binding domain. Residue 39–46 (GVTGSGKT) coordinates ATP. The Beta-hairpin signature appears at 92 to 115 (YYDYYQPEAYVPSSDTFIEKDASV). In terms of domain architecture, Helicase C-terminal spans 431–597 (QVDDLLSEIR…GLNKKVVDIL (167 aa)). The UVR domain maps to 633-668 (QQKIHELEGLMMQHAQNLEFEEAAQVRDQLHQLRQL).

The protein belongs to the UvrB family. Forms a heterotetramer with UvrA during the search for lesions. Interacts with UvrC in an incision complex.

It is found in the cytoplasm. In terms of biological role, the UvrABC repair system catalyzes the recognition and processing of DNA lesions. A damage recognition complex composed of 2 UvrA and 2 UvrB subunits scans DNA for abnormalities. Upon binding of the UvrA(2)B(2) complex to a putative damaged site, the DNA wraps around one UvrB monomer. DNA wrap is dependent on ATP binding by UvrB and probably causes local melting of the DNA helix, facilitating insertion of UvrB beta-hairpin between the DNA strands. Then UvrB probes one DNA strand for the presence of a lesion. If a lesion is found the UvrA subunits dissociate and the UvrB-DNA preincision complex is formed. This complex is subsequently bound by UvrC and the second UvrB is released. If no lesion is found, the DNA wraps around the other UvrB subunit that will check the other stand for damage. This chain is UvrABC system protein B, found in Enterobacter sp. (strain 638).